Reading from the N-terminus, the 393-residue chain is DNA primase small subunit PriS (393 aa).

Residues D100, D102, and D296 contribute to the active site.

This sequence belongs to the eukaryotic-type primase small subunit family. As to quaternary structure, heterodimer of a small subunit (PriS) and a large subunit (PriL). It depends on Mg(2+) as a cofactor. Mn(2+) serves as cofactor.

Functionally, catalytic subunit of DNA primase, an RNA polymerase that catalyzes the synthesis of short RNA molecules used as primers for DNA polymerase during DNA replication. The small subunit contains the primase catalytic core and has DNA synthesis activity on its own. Binding to the large subunit stabilizes and modulates the activity, increasing the rate of DNA synthesis while decreasing the length of the DNA fragments, and conferring RNA synthesis capability. The DNA polymerase activity may enable DNA primase to also catalyze primer extension after primer synthesis. May also play a role in DNA repair. This Natronomonas pharaonis (strain ATCC 35678 / DSM 2160 / CIP 103997 / JCM 8858 / NBRC 14720 / NCIMB 2260 / Gabara) (Halobacterium pharaonis) protein is DNA primase small subunit PriS.